The sequence spans 364 residues: Phosphoserine aminotransferase (364 aa).

L-glutamate is bound at residue R42. Residues 76-77 (AS), W100, T150, D169, and Q192 each bind pyridoxal 5'-phosphate. At K193 the chain carries N6-(pyridoxal phosphate)lysine. Position 234-235 (234-235 (NT)) interacts with pyridoxal 5'-phosphate.

It belongs to the class-V pyridoxal-phosphate-dependent aminotransferase family. SerC subfamily. As to quaternary structure, homodimer. Pyridoxal 5'-phosphate is required as a cofactor.

Its subcellular location is the cytoplasm. It catalyses the reaction O-phospho-L-serine + 2-oxoglutarate = 3-phosphooxypyruvate + L-glutamate. The enzyme catalyses 4-(phosphooxy)-L-threonine + 2-oxoglutarate = (R)-3-hydroxy-2-oxo-4-phosphooxybutanoate + L-glutamate. Its pathway is amino-acid biosynthesis; L-serine biosynthesis; L-serine from 3-phospho-D-glycerate: step 2/3. Catalyzes the reversible conversion of 3-phosphohydroxypyruvate to phosphoserine and of 3-hydroxy-2-oxo-4-phosphonooxybutanoate to phosphohydroxythreonine. In Shouchella clausii (strain KSM-K16) (Alkalihalobacillus clausii), this protein is Phosphoserine aminotransferase.